The primary structure comprises 58 residues: Ribulose bisphosphate carboxylase large chain (58 aa).

The propeptide occupies 1–2 (MS). Position 3 is an N-acetylproline (Pro-3). Lys-14 carries the post-translational modification N6,N6,N6-trimethyllysine.

Belongs to the RuBisCO large chain family. Type I subfamily. In terms of assembly, heterohexadecamer of 8 large chains and 8 small chains.

It localises to the plastid. Its subcellular location is the chloroplast. The catalysed reaction is 2 (2R)-3-phosphoglycerate + 2 H(+) = D-ribulose 1,5-bisphosphate + CO2 + H2O. It catalyses the reaction D-ribulose 1,5-bisphosphate + O2 = 2-phosphoglycolate + (2R)-3-phosphoglycerate + 2 H(+). Functionally, ruBisCO catalyzes two reactions: the carboxylation of D-ribulose 1,5-bisphosphate, the primary event in carbon dioxide fixation, as well as the oxidative fragmentation of the pentose substrate in the photorespiration process. Both reactions occur simultaneously and in competition at the same active site. This Weinmannia silvicola (Towai) protein is Ribulose bisphosphate carboxylase large chain (rbcL).